We begin with the raw amino-acid sequence, 335 residues long: Capsular polysaccharide phosphotransferase WcwK (335 aa).

The protein belongs to the stealth family.

This Streptococcus pneumoniae protein is Capsular polysaccharide phosphotransferase WcwK (wcwK).